The primary structure comprises 269 residues: Indole-3-glycerol phosphate synthase (269 aa).

This sequence belongs to the TrpC family.

The enzyme catalyses 1-(2-carboxyphenylamino)-1-deoxy-D-ribulose 5-phosphate + H(+) = (1S,2R)-1-C-(indol-3-yl)glycerol 3-phosphate + CO2 + H2O. Its pathway is amino-acid biosynthesis; L-tryptophan biosynthesis; L-tryptophan from chorismate: step 4/5. The sequence is that of Indole-3-glycerol phosphate synthase from Rhodococcus jostii (strain RHA1).